The chain runs to 417 residues: Blood group Rh(D) polypeptide (417 aa).

The next 11 helical transmembrane spans lie at 12 to 32 (CLPL…YFFT), 44 to 64 (LVAS…GLGF), 77 to 97 (VAFN…LDGF), 107 to 127 (VITL…LISV), 130 to 150 (VLGK…VTAL), 167 to 187 (MNMM…AWCL), 203 to 223 (TIPS…WPSF), 238 to 258 (VFNT…GSSL), 287 to 307 (LIPS…ISVG), 334 to 354 (LLGL…TVGA), and 358 to 378 (MIGF…VIAL).

This sequence belongs to the ammonium transporter (TC 2.A.49) family. Rh subfamily. Post-translationally, palmitoylated. In terms of tissue distribution, restricted to tissues or cell lines expressing erythroid characters.

Its subcellular location is the cell membrane. May be part of an oligomeric complex which is likely to have a transport or channel function in the erythrocyte membrane. This is Blood group Rh(D) polypeptide (RHD) from Homo sapiens (Human).